Consider the following 152-residue polypeptide: Deoxyuridine 5'-triphosphate nucleotidohydrolase (152 aa).

Residues 72-74 (RSG), Asn-85, and 89-91 (TID) each bind substrate.

This sequence belongs to the dUTPase family. Mg(2+) is required as a cofactor.

The enzyme catalyses dUTP + H2O = dUMP + diphosphate + H(+). It functions in the pathway pyrimidine metabolism; dUMP biosynthesis; dUMP from dCTP (dUTP route): step 2/2. Functionally, this enzyme is involved in nucleotide metabolism: it produces dUMP, the immediate precursor of thymidine nucleotides and it decreases the intracellular concentration of dUTP so that uracil cannot be incorporated into DNA. The sequence is that of Deoxyuridine 5'-triphosphate nucleotidohydrolase from Bradyrhizobium sp. (strain ORS 278).